The primary structure comprises 308 residues: Glycine--tRNA ligase alpha subunit (308 aa).

Belongs to the class-II aminoacyl-tRNA synthetase family. Tetramer of two alpha and two beta subunits.

It localises to the cytoplasm. It catalyses the reaction tRNA(Gly) + glycine + ATP = glycyl-tRNA(Gly) + AMP + diphosphate. The polypeptide is Glycine--tRNA ligase alpha subunit (Brevibacillus brevis (strain 47 / JCM 6285 / NBRC 100599)).